Here is a 264-residue protein sequence, read N- to C-terminus: S-adenosylmethionine decarboxylase proenzyme (264 aa).

Residue Ser112 is the Schiff-base intermediate with substrate; via pyruvic acid of the active site. At Ser112 the chain carries Pyruvic acid (Ser); by autocatalysis. The active-site Proton acceptor; for processing activity is His117. Cys140 serves as the catalytic Proton donor; for catalytic activity.

The protein belongs to the prokaryotic AdoMetDC family. Type 2 subfamily. As to quaternary structure, heterooctamer of four alpha and four beta chains arranged as a tetramer of alpha/beta heterodimers. Requires pyruvate as cofactor. In terms of processing, is synthesized initially as an inactive proenzyme. Formation of the active enzyme involves a self-maturation process in which the active site pyruvoyl group is generated from an internal serine residue via an autocatalytic post-translational modification. Two non-identical subunits are generated from the proenzyme in this reaction, and the pyruvate is formed at the N-terminus of the alpha chain, which is derived from the carboxyl end of the proenzyme. The post-translation cleavage follows an unusual pathway, termed non-hydrolytic serinolysis, in which the side chain hydroxyl group of the serine supplies its oxygen atom to form the C-terminus of the beta chain, while the remainder of the serine residue undergoes an oxidative deamination to produce ammonia and the pyruvoyl group blocking the N-terminus of the alpha chain.

The enzyme catalyses S-adenosyl-L-methionine + H(+) = S-adenosyl 3-(methylsulfanyl)propylamine + CO2. The protein operates within amine and polyamine biosynthesis; S-adenosylmethioninamine biosynthesis; S-adenosylmethioninamine from S-adenosyl-L-methionine: step 1/1. Functionally, catalyzes the decarboxylation of S-adenosylmethionine to S-adenosylmethioninamine (dcAdoMet), the propylamine donor required for the synthesis of the polyamines spermine and spermidine from the diamine putrescine. This chain is S-adenosylmethionine decarboxylase proenzyme, found in Enterobacter sp. (strain 638).